A 454-amino-acid chain; its full sequence is Prenyltransferase nscD (454 aa).

This sequence belongs to the tryptophan dimethylallyltransferase family.

It participates in secondary metabolite biosynthesis. Prenyltransferase; part of the gene cluster that mediates the biosynthesis of neosartoricin, a prenylated anthracenone that exhibits T-cell antiproliferative activity, suggestive of a physiological role as an immunosuppressive agent. The non-reducing polyketide synthase nscA probably synthesizes and cyclizes the decaketide backbone. The hydrolase nscB then mediates the product release through hydrolysis followed by spontaneous decarboxylation. The prenyltransferase nscD catalyzes the addition of the dimethylallyl group to the aromatic C5. The FAD-dependent monooxygenase nscC is then responsible for the stereospecific hydroxylation at C2. There is no gene encoding O-acetyltransferase in the nsc gene cluster; thus, the last step of 2-O-acetylation leading to neosartoricin may be catalyzed by an unidentified O-acetyltransferase. In Neosartorya fischeri (strain ATCC 1020 / DSM 3700 / CBS 544.65 / FGSC A1164 / JCM 1740 / NRRL 181 / WB 181) (Aspergillus fischerianus), this protein is Prenyltransferase nscD.